A 343-amino-acid chain; its full sequence is MSSVKLTEYSHGAGCGCKISPMLLDEILESTQKTSVYPQLLVGNANKDDAAAYDLGNGTSVLSTTDFFMPIVDDAFTFGQIAATNALSDIYAMGGKPLMAISIFGWPIDKLSADVAREVIDGGRSICEDAGIPLAGGHSIDSPEPIFGLAATGLVDNANLMQNDSAKKGCYIFLTKPLGIGILSTAQKQKKIEEGHIDPAIQAMTTLNKVGADLAPLESVVAMTDVTGFGLLGHLSEICEASDISAQVWFEKVPLLPNVEKYRQLGCIPGGARKNFASYGDKISEMTQQQREILCDAQTSGGLLVIVKKDGLEAFKKVTEAAGLTLEPIGETTVKSQHLVEVL.

The active site involves cysteine 15. ATP contacts are provided by residues lysine 18 and 46–48; that span reads NKD. Residue aspartate 49 coordinates Mg(2+). Residues aspartate 66, aspartate 89, and 137-139 each bind ATP; that span reads GHS. Position 89 (aspartate 89) interacts with Mg(2+). Mg(2+) is bound at residue aspartate 225.

It belongs to the selenophosphate synthase 1 family. Class I subfamily. In terms of assembly, homodimer. Requires Mg(2+) as cofactor.

It carries out the reaction hydrogenselenide + ATP + H2O = selenophosphate + AMP + phosphate + 2 H(+). In terms of biological role, synthesizes selenophosphate from selenide and ATP. This chain is Selenide, water dikinase, found in Sulfurovum sp. (strain NBC37-1).